Consider the following 238-residue polypeptide: Uridylate kinase (238 aa).

11 to 14 contributes to the ATP binding site; that stretch reads KLSG. Gly52 is a binding site for UMP. Residues Gly53 and Arg57 each contribute to the ATP site. Residues Asp72 and 134–141 contribute to the UMP site; that span reads TGFSYFTT. ATP is bound by residues Asn162, Tyr168, and Asp171.

It belongs to the UMP kinase family. In terms of assembly, homohexamer.

It localises to the cytoplasm. It carries out the reaction UMP + ATP = UDP + ADP. Its pathway is pyrimidine metabolism; CTP biosynthesis via de novo pathway; UDP from UMP (UMPK route): step 1/1. Inhibited by UTP. In terms of biological role, catalyzes the reversible phosphorylation of UMP to UDP. The sequence is that of Uridylate kinase from Mesoplasma florum (strain ATCC 33453 / NBRC 100688 / NCTC 11704 / L1) (Acholeplasma florum).